Here is a 668-residue protein sequence, read N- to C-terminus: Cyclin-dependent kinase 11.2 (668 aa).

Positions 1–265 (MSNYSTNGSR…EQWESMTENE (265 aa)) are disordered. Composition is skewed to basic and acidic residues over residues 35 to 73 (KTKE…DHRD), 85 to 127 (YCRD…DSLR), and 140 to 163 (LPDD…KTVM). The span at 164–181 (EVEDVEMSPVEMLDEEEV) shows a compositional bias: acidic residues. Basic and acidic residues-rich tracts occupy residues 197–212 (NEPE…DPES) and 245–265 (PDDK…TENE). The Protein kinase domain maps to 304–600 (YVILNVIAEG…ASEALQHDWF (297 aa)). Residues 310-318 (IAEGTYGEV) and lysine 333 contribute to the ATP site. The active-site Proton acceptor is aspartate 432.

This sequence belongs to the protein kinase superfamily. CMGC Ser/Thr protein kinase family. CDC2/CDKX subfamily. In terms of tissue distribution, expressed in somatic cells and at varying levels throughout the germline (at protein level). Highly expressed in the germ line of hermaphrodites (at protein level).

The protein resides in the nucleus. Its subcellular location is the cytoplasm. The enzyme catalyses L-seryl-[protein] + ATP = O-phospho-L-seryl-[protein] + ADP + H(+). The catalysed reaction is L-threonyl-[protein] + ATP = O-phospho-L-threonyl-[protein] + ADP + H(+). In terms of biological role, probable cyclin-dependent kinase whose activity is most likely regulated by the cyclin cyl-1/Cylin-L. Acts partially redundantly with cdk-11.1 to ensure embryonic viability. In contrast to cdk-11.1, not essential for male and female fertility. This is Cyclin-dependent kinase 11.2 from Caenorhabditis elegans.